The chain runs to 104 residues: uncharacterized protein (104 aa).

A helical transmembrane segment spans residues glycine 80–leucine 98.

The protein localises to the membrane. This is an uncharacterized protein from Saccharomyces cerevisiae (strain ATCC 204508 / S288c) (Baker's yeast).